The following is a 261-amino-acid chain: 3-deoxy-manno-octulosonate cytidylyltransferase (261 aa).

The protein belongs to the KdsB family.

It is found in the cytoplasm. The catalysed reaction is 3-deoxy-alpha-D-manno-oct-2-ulosonate + CTP = CMP-3-deoxy-beta-D-manno-octulosonate + diphosphate. The protein operates within nucleotide-sugar biosynthesis; CMP-3-deoxy-D-manno-octulosonate biosynthesis; CMP-3-deoxy-D-manno-octulosonate from 3-deoxy-D-manno-octulosonate and CTP: step 1/1. Its pathway is bacterial outer membrane biogenesis; lipopolysaccharide biosynthesis. Functionally, activates KDO (a required 8-carbon sugar) for incorporation into bacterial lipopolysaccharide in Gram-negative bacteria. This is 3-deoxy-manno-octulosonate cytidylyltransferase from Marinobacter nauticus (strain ATCC 700491 / DSM 11845 / VT8) (Marinobacter aquaeolei).